We begin with the raw amino-acid sequence, 383 residues long: Mannitol-1-phosphate 5-dehydrogenase (383 aa).

3 to 14 serves as a coordination point for NAD(+); the sequence is AVHFGAGNIGRG.

Belongs to the mannitol dehydrogenase family.

The catalysed reaction is D-mannitol 1-phosphate + NAD(+) = beta-D-fructose 6-phosphate + NADH + H(+). The chain is Mannitol-1-phosphate 5-dehydrogenase from Lacticaseibacillus casei (strain BL23) (Lactobacillus casei).